Consider the following 154-residue polypeptide: Toxin YhaV (154 aa).

Homohexamer; forms a complex with PrlF (SohA) with stoichiometry PrlF(2)-YhaV(4), possibly as a YhaV(2)-PrlF(2)-YhaV(2) complex like the MazFE complex. May dimerize in solution.

Its function is as follows. Toxic component of a type II toxin-antitoxin (TA) system. Has RNase activity in vitro. Acts as a transcription factor. The YhaV/PrlF complex binds the prlF-yhaV operon, probably negatively regulating its expression. This Escherichia coli O157:H7 protein is Toxin YhaV (yhaV).